The primary structure comprises 454 residues: UPF0210 protein EUBREC_1565 (454 aa).

It belongs to the UPF0210 family. Homodimer.

This is UPF0210 protein EUBREC_1565 from Agathobacter rectalis (strain ATCC 33656 / DSM 3377 / JCM 17463 / KCTC 5835 / VPI 0990) (Eubacterium rectale).